Here is a 241-residue protein sequence, read N- to C-terminus: Zinc finger CCHC domain-containing protein 17 (241 aa).

The S1 motif domain maps to 16–88 (YTIFQGEVAM…DRIKVSLSMK (73 aa)). At serine 114 the chain carries Phosphoserine. The CCHC-type zinc finger occupies 131-148 (TTCKKCGCKGHFAKDCFM). Lysine 144 bears the N6-acetyllysine mark. Residues 160–241 (EEEEEKEEAK…KKKHKKKHKE (82 aa)) form a disordered region. Basic and acidic residues predominate over residues 166–178 (EEAKAEGLEKPDP). The segment covering 182–198 (SSRKRKKEKKKKKHRDR) has biased composition (basic residues). At serine 183 the chain carries Phosphoserine. The segment covering 211-225 (DTGKKARHSSKDSKA) has biased composition (basic and acidic residues). The segment covering 226–241 (TKKKKKKKKHKKKHKE) has biased composition (basic residues).

Interacts with PNN. Associates with the 60S ribosomal subunit. Expressed in liver, brain, heart, kidney testis, stomach, small intestine, skin, thymus, uterus, placenta, spleen, lung and skeletal muscle.

It localises to the nucleus. The protein localises to the nucleolus. This Mus musculus (Mouse) protein is Zinc finger CCHC domain-containing protein 17 (Zcchc17).